We begin with the raw amino-acid sequence, 358 residues long: Photosystem II protein D1 2 (358 aa).

Helical transmembrane passes span 28 to 45, 117 to 132, and 141 to 155; these read YVGWFGVLMIPCLLAATI, HFLIGISAYMGRQWEL, and WICVAYSAPLSAAMA. Histidine 117 provides a ligand contact to chlorophyll a. Tyrosine 125 lines the pheophytin a pocket. [CaMn4O5] cluster contacts are provided by aspartate 169 and glutamate 188. The helical transmembrane segment at 196–217 threads the bilayer; it reads FHMLGVAGVFGGSLFSAMHGSL. Position 197 (histidine 197) interacts with chlorophyll a. Residues histidine 214 and 263–264 each bind a quinone; that span reads SF. Fe cation is bound at residue histidine 214. Histidine 271 is a Fe cation binding site. Residues 273-287 form a helical membrane-spanning segment; that stretch reads FLGAWPVVGIWFTSM. Histidine 331, glutamate 332, aspartate 341, and alanine 343 together coordinate [CaMn4O5] cluster. Positions 344 to 358 are excised as a propeptide; sequence AAESTPVALQAPAIG.

Belongs to the reaction center PufL/M/PsbA/D family. In terms of assembly, PSII is composed of 1 copy each of membrane proteins PsbA, PsbB, PsbC, PsbD, PsbE, PsbF, PsbH, PsbI, PsbJ, PsbK, PsbL, PsbM, PsbT, PsbX, PsbY, PsbZ, Psb30/Ycf12, peripheral proteins PsbO, CyanoQ (PsbQ), PsbU, PsbV and a large number of cofactors. It forms dimeric complexes. The D1/D2 heterodimer binds P680, chlorophylls that are the primary electron donor of PSII, and subsequent electron acceptors. It shares a non-heme iron and each subunit binds pheophytin, quinone, additional chlorophylls, carotenoids and lipids. D1 provides most of the ligands for the Mn4-Ca-O5 cluster of the oxygen-evolving complex (OEC). There is also a Cl(-1) ion associated with D1 and D2, which is required for oxygen evolution. The PSII complex binds additional chlorophylls, carotenoids and specific lipids. is required as a cofactor. Tyr-160 forms a radical intermediate that is referred to as redox-active TyrZ, YZ or Y-Z. In terms of processing, C-terminally processed by CtpA; processing is essential to allow assembly of the oxygen-evolving complex and thus photosynthetic growth.

The protein resides in the cellular thylakoid membrane. The catalysed reaction is 2 a plastoquinone + 4 hnu + 2 H2O = 2 a plastoquinol + O2. Its function is as follows. Photosystem II (PSII) is a light-driven water:plastoquinone oxidoreductase that uses light energy to abstract electrons from H(2)O, generating O(2) and a proton gradient subsequently used for ATP formation. It consists of a core antenna complex that captures photons, and an electron transfer chain that converts photonic excitation into a charge separation. The D1/D2 (PsbA/PsbD) reaction center heterodimer binds P680, the primary electron donor of PSII as well as several subsequent electron acceptors. The protein is Photosystem II protein D1 2 of Synechococcus sp. (strain CC9605).